A 350-amino-acid chain; its full sequence is MRIPNIFLSYLRQVAVDGTLSSCSGVKSRKPVIAFGFDDSQDSLVDENDEKILEPFGYYRHLLKGKSARTVLMHCFNAFLGLPEDWVLGVTKAIEDLHNASLLIDDIEDESALRRGSPAAHMKYGIALTMNAGNLVYFTVLQDIYDLGMRTGGTQVANAMAHIYTEEMIELHRGQGIEIWWRDQRSPPSVDQYIHMLEQKTGGLLRLGVRLLQCHPGGNNRADLSAIALRIGVYYQLRDDYINLMSTSYHDERGFAEDITEGKYTFPMLHSLKRSPDSGLREILDLKPADIALKKKAIAIMQETGSLIATRNLLGAVKNDLSGLVAEQRGDDYAMSAGLERFLEKLYIAE.

Isopentenyl diphosphate is bound by residues Lys-66, Arg-69, and His-98. Asp-105 and Asp-109 together coordinate Mg(2+). Arg-114 contacts dimethylallyl diphosphate. Arg-115 contacts isopentenyl diphosphate. The dimethylallyl diphosphate site is built by Lys-200, Thr-201, Gln-236, Asn-243, and Lys-263.

The protein belongs to the FPP/GGPP synthase family. The cofactor is Mg(2+).

The enzyme catalyses isopentenyl diphosphate + dimethylallyl diphosphate = (2E)-geranyl diphosphate + diphosphate. It carries out the reaction isopentenyl diphosphate + (2E)-geranyl diphosphate = (2E,6E)-farnesyl diphosphate + diphosphate. It catalyses the reaction isopentenyl diphosphate + (2E,6E)-farnesyl diphosphate = (2E,6E,10E)-geranylgeranyl diphosphate + diphosphate. It functions in the pathway secondary metabolite biosynthesis; terpenoid biosynthesis. Its function is as follows. Geranylgeranyl pyrophosphate synthase; part of the gene cluster that mediates the biosynthesis of pleuromutilin, a tricyclic diterpene showing antibacterial properties. The geranylgeranyl diphosphate (GGPP) synthase ple4 catalyzes the first step in pleuromutilin biosynthesis. GGPP is then substrate of the premutilin synthase (PS) ple3 to yield premutilin. Premutilin synthase is a bifunctional enzyme composed of the fusion of a class II diterpene cyclase (DTC) and a class I diterpene synthase (DTS), with the corresponding domains and active sites containing characteristic aspartate-rich motifs. GGPP is first converted to mutildienyl-diphosphate (MPP) at the class II DTC site. MPP is subsequently further cyclized at the class I DTS site, followed by a 1,5-hydride shift and addition of water prior to terminating deprotonation, to yield premutilin. The cytochrome P450 monooxygenases ple5 and ple6 hydroxylate premutilin at C-11 and C-3, respectively, producing 11-hydroxypremutilin and 3-hydroxypremutilin. The combination of the actions of both ple5 and ple6 leads to the production of 3,11-dihydroxypremutilin. The short chain dehydrogenase ple7 further converts 3,11-dihydroxypremutilin into mutilin. The acetyltransferase ple2 then acetylates mutilin to produce 14-O-acetylmutilin. Finally, the cytochrome P450 monooxygenase ple1 catalyzes hydroxylation on the alpha position of the acetyl side chain of 14-O-acetylmutilin to yield pleuromutilin. This is Geranylgeranyl pyrophosphate synthase from Rhodocybe pseudopiperita (Clitopilus pseudopiperitus).